The following is a 548-amino-acid chain: Probable malate:quinone oxidoreductase (548 aa).

The segment at 521 to 548 (DKPQAADSTPKPQLKPQPVQKEVADIAL) is disordered. A compositionally biased stretch (low complexity) spans 530 to 541 (PKPQLKPQPVQK).

It belongs to the MQO family. The cofactor is FAD.

The enzyme catalyses (S)-malate + a quinone = a quinol + oxaloacetate. The protein operates within carbohydrate metabolism; tricarboxylic acid cycle; oxaloacetate from (S)-malate (quinone route): step 1/1. The sequence is that of Probable malate:quinone oxidoreductase from Escherichia coli O17:K52:H18 (strain UMN026 / ExPEC).